The chain runs to 114 residues: uncharacterized protein (114 aa).

An ABM domain is found at 13-99 (YYAVIFSSVK…VWYESYAVRV (87 aa)).

This is an uncharacterized protein from Bacillus subtilis (strain 168).